The primary structure comprises 164 residues: UPF0305 protein MTH_812 (164 aa).

It belongs to the UPF0305 family.

The chain is UPF0305 protein MTH_812 from Methanothermobacter thermautotrophicus (strain ATCC 29096 / DSM 1053 / JCM 10044 / NBRC 100330 / Delta H) (Methanobacterium thermoautotrophicum).